The chain runs to 517 residues: MAIAEALLFVNNRAVEHPLQFLTAVAFAVPLLYVVINEFIRASARIPGFKGPRGLPLIGNLAQIRKDAAEQYRIWSKIYGPVYQIQLGNIPVLVVNSAAAAKVLFGQNAQALSSRPEFYTFHKIVSNTAGTTIGTSPYSESLKRRRKGAASALNRPSVESYVHHLDVESKAFVAELFKYGNGGKTPVDPMAMIQRLSLSLALTLNWGVRVASQEEELFDEITEVEDKISKFRSTTGNLQDYIPILRLNPFSSNSHKAKEMRDRRDKYLSSLNRDLDDRMEKGTHKPCIQANVILDKEAKLNSEELTSISLTMLSGGLDTVTTLVAWSISLLAQRPDIQDKAAKAIQEMYSEGQPLCDPADDQKCAYVAALVRECLRYYTVLRLALPRTSIRDITYDGKVIPKGTVFFLNAWACNMDPEVWSDPDEFRPERWFEQPDAPMFTYGMGYRMCAGSLLANRELYLVFIRTLNSFRIEPTEEKIEWHPLKGNSDPTSLVAIPKKYKVRFVPKNEVSLVEALS.

Residue Cys449 coordinates heme.

It belongs to the cytochrome P450 family.

It carries out the reaction 3-hydroxyphenylacetate + NADH + O2 + H(+) = homogentisate + NAD(+) + H2O. It catalyses the reaction 3-hydroxyphenylacetate + NADPH + O2 + H(+) = homogentisate + NADP(+) + H2O. The enzyme catalyses 3,4-dihydroxyphenylacetate + NADH + O2 + H(+) = 2,4,5-trihydroxyphenylacetate + NAD(+) + H2O. The catalysed reaction is 3,4-dihydroxyphenylacetate + NADPH + O2 + H(+) = 2,4,5-trihydroxyphenylacetate + NADP(+) + H2O. It participates in aromatic compound metabolism; phenylacetate degradation. Its function is as follows. Catalyzes the hydroxylation of 3-hydroxyphenylacetate and 3,4-dihydroxyphenylacetate to 2,5-dihydroxyphenylacetate (homogentisate) and 2,4,5-trihydroxyphenylacetate, respectively. Both of these compounds are used as substrate by homogentisate dioxygenase in the homogentisate pathway. The homogentisate pathway is used to catabolize phenylacetate and use it as a carbon source. Can also catalyze the hydroxylation of phenylacetate to 2-hydroxyphenylacetate at low efficiency to compensate for loss of phacA. The chain is 3-hydroxyphenylacetate 6-hydroxylase (phacB) from Emericella nidulans (Aspergillus nidulans).